We begin with the raw amino-acid sequence, 355 residues long: WAT1-related protein At3g28130 (355 aa).

A run of 10 helical transmembrane segments spans residues 11 to 31 (AVLLTAMLATETGNVAMNTLF), 42 to 62 (YTFLIYSYLIGSIVLLPSHIF), 80 to 100 (IGVLGLLGSTYLITGFIGIEY), 104 to 124 (TLASAISNINPAITFILAIIF), 136 to 156 (SVAKMVGTIVSLVGALVVVLY), 186 to 206 (WIIGGCLLAIKDTLVPVAFIL), 218 to 238 (FTVSFFYFLIASILTSLIGIV), 244 to 264 (PSIWIIHFDITLVCIVVGGIF), 290 to 310 (LSILIAVIMGAIFLGDSFYLG), and 311 to 331 (SLVGGILISLGFYTVMWGKAK). Positions 29 to 154 (TLFKAATSKG…VSLVGALVVV (126 aa)) constitute an EamA domain.

Belongs to the drug/metabolite transporter (DMT) superfamily. Plant drug/metabolite exporter (P-DME) (TC 2.A.7.4) family.

Its subcellular location is the membrane. The sequence is that of WAT1-related protein At3g28130 from Arabidopsis thaliana (Mouse-ear cress).